A 386-amino-acid chain; its full sequence is MSSTRSPLKTKNENTISTKMNNMSFVDKENTPPSLSSTRILASKTARKIFDESEGQSKAKKGAVEEEPLLKENPHRFVIFPIQYHDIWQMYKKAEASFWTAEEVDLSKDLQHWDSLKDEERYFISHVLAFFAASDGIVNENLVERFTQEVQVTEARCFYGFQIAMENIHSEMYSLLIDTYIKDSKEREFLFNAIETMPCVKKKADWALNWIGDKNARYGERVVAFAAVEGIFFSGSFASIFWLKKRGLMPGLTFSNELISRDEGLHCDFACLMFKHLINKPSEETVKKIIMNAVEIEQEFLTDALPVKLIGMNCDLMKQYIEFVADRLLLELGFDKVYRVENPFDFMENISLEGKTNFFEKRVGEYQRMGVMSGTTDNTFTLDADF.

The span at 1-24 (MSSTRSPLKTKNENTISTKMNNMS) shows a compositional bias: polar residues. The segment at 1-36 (MSSTRSPLKTKNENTISTKMNNMSFVDKENTPPSLS) is disordered. S6 is modified (phosphoserine). Residue T31 is modified to Phosphothreonine. Residues D135, E166, and H169 each coordinate Fe cation. Y173 is a catalytic residue. The Fe cation site is built by E229, E263, and H266.

This sequence belongs to the ribonucleoside diphosphate reductase small chain family. In terms of assembly, heterodimer of a large and a small subunit. Fe cation serves as cofactor.

The protein resides in the cytoplasm. The catalysed reaction is a 2'-deoxyribonucleoside 5'-diphosphate + [thioredoxin]-disulfide + H2O = a ribonucleoside 5'-diphosphate + [thioredoxin]-dithiol. Its function is as follows. Provides the precursors necessary for DNA synthesis. Catalyzes the biosynthesis of deoxyribonucleotides from the corresponding ribonucleotides. The sequence is that of Ribonucleoside-diphosphate reductase subunit M2 (rrm2) from Danio rerio (Zebrafish).